We begin with the raw amino-acid sequence, 217 residues long: Small ribosomal subunit protein uS3 (217 aa).

The KH type-2 domain occupies 40 to 110 (IRDLINKWFN…EVYINIHEVR (71 aa)).

This sequence belongs to the universal ribosomal protein uS3 family. As to quaternary structure, part of the 30S ribosomal subunit. Forms a tight complex with proteins S10 and S14.

Its function is as follows. Binds the lower part of the 30S subunit head. Binds mRNA in the 70S ribosome, positioning it for translation. The chain is Small ribosomal subunit protein uS3 from Rickettsia prowazekii (strain Madrid E).